We begin with the raw amino-acid sequence, 240 residues long: 2,3,4,5-tetrahydropyridine-2,6-dicarboxylate N-acetyltransferase (240 aa).

Belongs to the transferase hexapeptide repeat family. DapH subfamily.

The catalysed reaction is (S)-2,3,4,5-tetrahydrodipicolinate + acetyl-CoA + H2O = L-2-acetamido-6-oxoheptanedioate + CoA. It functions in the pathway amino-acid biosynthesis; L-lysine biosynthesis via DAP pathway; LL-2,6-diaminopimelate from (S)-tetrahydrodipicolinate (acetylase route): step 1/3. In terms of biological role, catalyzes the transfer of an acetyl group from acetyl-CoA to tetrahydrodipicolinate. The polypeptide is 2,3,4,5-tetrahydropyridine-2,6-dicarboxylate N-acetyltransferase (Bacillus cytotoxicus (strain DSM 22905 / CIP 110041 / 391-98 / NVH 391-98)).